The primary structure comprises 86 residues: Large ribosomal subunit protein bL27 (86 aa).

The interval 1-24 (MAHKKGTGSTRNGRDSNSKRLGVK) is disordered.

Belongs to the bacterial ribosomal protein bL27 family.

The protein is Large ribosomal subunit protein bL27 of Prochlorococcus marinus (strain AS9601).